Consider the following 255-residue polypeptide: L-erythrulose-1-phosphate isomerase (255 aa).

The active-site Electrophile is the histidine 98. Glutamate 171 functions as the Proton acceptor in the catalytic mechanism. Residues glycine 177 and serine 214 each coordinate substrate.

It belongs to the triosephosphate isomerase family. As to quaternary structure, homodimer.

The protein resides in the cytoplasm. It carries out the reaction L-erythrulose 1-phosphate = D-erythrulose 4-phosphate. The protein operates within carbohydrate metabolism; erythritol degradation. Catalyzes the isomerization of D-erythrulose-4P to L-erythrulose-1P. The sequence is that of L-erythrulose-1-phosphate isomerase from Rhizobium meliloti (strain 1021) (Ensifer meliloti).